The chain runs to 519 residues: NADH-ubiquinone oxidoreductase chain 4 (519 aa).

A run of 14 helical transmembrane segments spans residues 2–22 (SGLL…ILSF), 68–88 (IAFI…ILFD), 112–132 (VDGL…IALI), 146–166 (LIII…LDVL), 167–187 (LFYI…GLFG), 196–216 (FYIF…ILTM), 239–259 (IFLF…VFLN), 270–290 (PLGG…YGIF), 304–324 (YTSI…FSTL), 333–353 (IAYS…SNII), 360–380 (ILLG…AGGV), 399–419 (VMPL…GAPL), 437–457 (LPLL…YTIY), and 484–504 (FFLL…PSFI).

This sequence belongs to the complex I subunit 4 family.

It is found in the mitochondrion membrane. The enzyme catalyses a ubiquinone + NADH + 5 H(+)(in) = a ubiquinol + NAD(+) + 4 H(+)(out). Its function is as follows. Core subunit of the mitochondrial membrane respiratory chain NADH dehydrogenase (Complex I) that is believed to belong to the minimal assembly required for catalysis. Complex I functions in the transfer of electrons from NADH to the respiratory chain. The immediate electron acceptor for the enzyme is believed to be ubiquinone. In Podospora anserina (strain S / ATCC MYA-4624 / DSM 980 / FGSC 10383) (Pleurage anserina), this protein is NADH-ubiquinone oxidoreductase chain 4 (ND4).